Reading from the N-terminus, the 360-residue chain is Phospho-N-acetylmuramoyl-pentapeptide-transferase (360 aa).

10 consecutive transmembrane segments (helical) span residues 21-41 (YLSFRAILSVLTALGLSLWMG), 73-93 (TMGGVMILAAISITILLWANL), 94-114 (SNPYVWAVLAVLMGYGAVGFV), 132-152 (WKYFWQSAIALIVAFALYAYG), 168-188 (VMPQLGLMYIVLTYFVIVGTS), 199-219 (GLAIMPTVLVAAGFAVIAWAT), 236-256 (ASELVVVCTAIVGAGLGFLWF), 263-283 (VFMGDVGSLALGGALGTIAVL), 288-308 (LVLVIMGGVFVMETLSVILQV), and 338-358 (VIVRFWIISMVLVLIGLATLK).

Belongs to the glycosyltransferase 4 family. MraY subfamily. It depends on Mg(2+) as a cofactor.

It localises to the cell inner membrane. It carries out the reaction UDP-N-acetyl-alpha-D-muramoyl-L-alanyl-gamma-D-glutamyl-meso-2,6-diaminopimeloyl-D-alanyl-D-alanine + di-trans,octa-cis-undecaprenyl phosphate = di-trans,octa-cis-undecaprenyl diphospho-N-acetyl-alpha-D-muramoyl-L-alanyl-D-glutamyl-meso-2,6-diaminopimeloyl-D-alanyl-D-alanine + UMP. Its pathway is cell wall biogenesis; peptidoglycan biosynthesis. In terms of biological role, catalyzes the initial step of the lipid cycle reactions in the biosynthesis of the cell wall peptidoglycan: transfers peptidoglycan precursor phospho-MurNAc-pentapeptide from UDP-MurNAc-pentapeptide onto the lipid carrier undecaprenyl phosphate, yielding undecaprenyl-pyrophosphoryl-MurNAc-pentapeptide, known as lipid I. In Vibrio vulnificus (strain CMCP6), this protein is Phospho-N-acetylmuramoyl-pentapeptide-transferase.